Here is a 626-residue protein sequence, read N- to C-terminus: Forkhead box protein O1 (626 aa).

Residues 1–11 show a composition bias toward pro residues; the sequence is MAEAPLPPPPG. Disordered stretches follow at residues 1–57, 90–142, 218–319, and 484–519; these read MAEA…PAAG, DIRQ…SRRN, SSWW…MPEQ, and PTYG…MTHN. 2 stretches are compositionally biased toward low complexity: residues 37 to 48 and 101 to 133; these read NPSSSANSSPAP and QHPQ…AQQP. Residues 144 to 238 constitute a DNA-binding region (fork-head); sequence WGNLSYADLI…KNGKSPRRRA (95 aa). Over residues 248-259 the composition is skewed to basic residues; sequence AKSRGRAAKKKA. Low complexity predominate over residues 262–277; sequence QSSQDGSSDSPGSQFS. Polar residues-rich tracts occupy residues 298-310 and 484-494; these read RPRT…TISG and PTYGSQPTHNK.

In terms of processing, phosphorylated by AKT1; insulin-induced. Post-translationally, IGF1 rapidly induces phosphorylation of Thr-28, Ser-240 and Ser-303. Phosphorylation of Ser-240 decreases DNA-binding activity and promotes the phosphorylation of Thr-28, and Ser-303, which leads to nuclear exclusion and loss of function. Phosphorylation of Ser-313 is independent of IGF1 and leads to reduced function.

Its subcellular location is the cytoplasm. It localises to the nucleus. Its function is as follows. Transcription factor that regulates metabolic homeostasis in response to oxidative stress. Binds to the consensus sequence 5'-TT[G/A]TTTTG-3' and the related Daf-16 family binding element (DBE) with consensus sequence 5'-TT[G/A]TTTAC-3'. Main regulator of redox balance and osteoblast numbers and controls bone mass. Orchestrates the endocrine function of the skeleton in regulating glucose metabolism. Also acts as a key regulator of chondrogenic commitment of skeletal progenitor cells in response to lipid availability: when lipids levels are low, translocates to the nucleus and promotes expression of sox9, which induces chondrogenic commitment and suppresses fatty acid oxidation. Acts synergistically with atf4 to suppress osteocalcin/bglap activity, increasing glucose levels and triggering glucose intolerance and insulin insensitivity. Also suppresses the transcriptional activity of runx2, an upstream activator of osteocalcin/bglap. May act as a positive regulator of apoptosis in cardiac smooth muscle cells as a result of its transcriptional activation of pro-apoptotic genes. The protein is Forkhead box protein O1 of Xenopus tropicalis (Western clawed frog).